Reading from the N-terminus, the 189-residue chain is MSTLAKIEALLFVAGEDGIRVRQLAELLSLPPTGIQQSLGKLAQKYEKDPDSSLALIETSGAYRLVTKPQFAEILKEYSKAPINQSLSRAALETLSIIAYKQPITRIEIDAIRGVNSSGALAKLQAFDLIKEDGKKEVLGRPNLYVTTDYFLDYMGINHLEELPVIDELEIQAQESQLFGERIEEDENQ.

The protein belongs to the ScpB family. In terms of assembly, homodimer. Homodimerization may be required to stabilize the binding of ScpA to the Smc head domains. Component of a cohesin-like complex composed of ScpA, ScpB and the Smc homodimer, in which ScpA and ScpB bind to the head domain of Smc. The presence of the three proteins is required for the association of the complex with DNA.

It localises to the cytoplasm. Its function is as follows. Participates in chromosomal partition during cell division. May act via the formation of a condensin-like complex containing Smc and ScpA that pull DNA away from mid-cell into both cell halves. The sequence is that of Segregation and condensation protein B from Streptococcus pneumoniae serotype 19F (strain G54).